The sequence spans 408 residues: Glutathione-independent formaldehyde dehydrogenase (408 aa).

C61 contributes to the Zn(2+) binding site. The NAD(+) site is built by G62, S63, and H66. Zn(2+) contacts are provided by H82, C112, C115, C118, C126, and D184. The NAD(+) site is built by V212, D232, R237, V277, H284, P311, L313, G348, and T350.

Belongs to the zinc-containing alcohol dehydrogenase family. It depends on Zn(2+) as a cofactor.

It catalyses the reaction formaldehyde + NAD(+) + H2O = formate + NADH + 2 H(+). Activity is not inhibited by EDTA, which is probably not sufficient to displace the bound metal. Its function is as follows. Dehydrogenase that catalyzes the NAD(+)-dependent oxidation of formaldehyde. Exhibits lower activity with acetaldehyde (about 10-fold lower than for formaldehyde), but cannot use methanol, ethanol, 1-butanol, glyoxal or formic acid. Is involved in formaldehyde detoxification. The protein is Glutathione-independent formaldehyde dehydrogenase of Bacillus subtilis (strain 168).